Reading from the N-terminus, the 432-residue chain is D-amino acid dehydrogenase (432 aa).

Position 3-17 (3-17) interacts with FAD; sequence VVILGSGVVGVTSAW.

Belongs to the DadA oxidoreductase family. The cofactor is FAD.

It carries out the reaction a D-alpha-amino acid + A + H2O = a 2-oxocarboxylate + AH2 + NH4(+). It functions in the pathway amino-acid degradation; D-alanine degradation; NH(3) and pyruvate from D-alanine: step 1/1. Functionally, oxidative deamination of D-amino acids. This Salmonella choleraesuis (strain SC-B67) protein is D-amino acid dehydrogenase.